A 387-amino-acid polypeptide reads, in one-letter code: Eukaryotic translation initiation factor 3 subunit M (387 aa).

The PCI domain occupies 181 to 340; sequence LSSKVMIELL…RKVHISSTMH (160 aa).

The protein belongs to the eIF-3 subunit M family. As to quaternary structure, component of the eukaryotic translation initiation factor 3 (eIF-3) complex. The eIF-3 complex interacts with pix.

The protein resides in the cytoplasm. It is found in the golgi apparatus. In terms of biological role, component of the eukaryotic translation initiation factor 3 (eIF-3) complex, which is involved in protein synthesis of a specialized repertoire of mRNAs and, together with other initiation factors, stimulates binding of mRNA and methionyl-tRNAi to the 40S ribosome. The eIF-3 complex specifically targets and initiates translation of a subset of mRNAs involved in cell proliferation. The protein is Eukaryotic translation initiation factor 3 subunit M of Drosophila grimshawi (Hawaiian fruit fly).